The following is a 191-amino-acid chain: HTH-type transcriptional regulator SAR0097 (191 aa).

Residues 12 to 74 (AEYNQQIILT…AIMDKKVDQM (63 aa)) form the HTH tetR-type domain. A DNA-binding region (H-T-H motif) is located at residues 37–56 (KMSDIAKISGVGVGTLYRHF).

This is HTH-type transcriptional regulator SAR0097 from Staphylococcus aureus (strain MRSA252).